The following is a 236-amino-acid chain: Small ribosomal subunit protein uS2c (236 aa).

Belongs to the universal ribosomal protein uS2 family.

It is found in the plastid. Its subcellular location is the chloroplast. This chain is Small ribosomal subunit protein uS2c (rps2), found in Nicotiana tabacum (Common tobacco).